A 192-amino-acid chain; its full sequence is Fanconi anemia core complex-associated protein 20 (192 aa).

A compositionally biased stretch (basic residues) spans 1–16; it reads MEATRRSRLSLSRRRP. Disordered stretches follow at residues 1-34 and 51-151; these read MEAT…PDGG and LNVD…SSVD. Residues 66 to 76 show a composition bias toward basic and acidic residues; it reads QEPRRSPERPP. Residues Ser119 and Ser149 each carry the phosphoserine modification. Residues 132 to 149 show a composition bias toward low complexity; that stretch reads PSAEEQPSEEQPSQRQSS. Residues 156–192 form a UBZ2-type zinc finger; it reads LQSCPMCQVDFAPGLAQLDIDGHLAQCLADSTDDIEW. Residues Cys159, Cys162, His178, and Cys182 each contribute to the Zn(2+) site.

Component of the Fanconi anemia (FA) complex. Interacts with FANCA; interaction is direct. Interacts with REV1.

It is found in the nucleus. The protein localises to the chromosome. In terms of biological role, component of the Fanconi anemia (FA) complex required to recruit the FA complex to DNA interstrand cross-links (ICLs) and promote ICLs repair. Following DNA damage recognizes and binds 'Lys-63'-linked ubiquitin generated by RNF8 at ICLs and recruits other components of the FA complex. Promotes translesion synthesis via interaction with REV1. This is Fanconi anemia core complex-associated protein 20 from Bos taurus (Bovine).